We begin with the raw amino-acid sequence, 211 residues long: Histidine biosynthesis bifunctional protein HisIE (211 aa).

Positions 1 to 122 are phosphoribosyl-AMP cyclohydrolase; sequence MSFKTAEVSS…DPQEESQMVW (122 aa). The segment at 123–211 is phosphoribosyl-ATP pyrophosphohydrolase; sequence LHQLEQLLAA…VINKLKERHK (89 aa).

In the N-terminal section; belongs to the PRA-CH family. This sequence in the C-terminal section; belongs to the PRA-PH family.

It is found in the cytoplasm. It catalyses the reaction 1-(5-phospho-beta-D-ribosyl)-ATP + H2O = 1-(5-phospho-beta-D-ribosyl)-5'-AMP + diphosphate + H(+). The catalysed reaction is 1-(5-phospho-beta-D-ribosyl)-5'-AMP + H2O = 1-(5-phospho-beta-D-ribosyl)-5-[(5-phospho-beta-D-ribosylamino)methylideneamino]imidazole-4-carboxamide. Its pathway is amino-acid biosynthesis; L-histidine biosynthesis; L-histidine from 5-phospho-alpha-D-ribose 1-diphosphate: step 2/9. It participates in amino-acid biosynthesis; L-histidine biosynthesis; L-histidine from 5-phospho-alpha-D-ribose 1-diphosphate: step 3/9. The sequence is that of Histidine biosynthesis bifunctional protein HisIE from Vibrio vulnificus (strain CMCP6).